Reading from the N-terminus, the 600-residue chain is DNA polymerase alpha subunit B (600 aa).

Residues 112-167 form a disordered region; the sequence is AYTTPSKGPHKRVSSTPETPLTKRSISTRSPHQLLSPSSFSPSATPSQKYSSRTNR. The segment covering 125-140 has biased composition (polar residues); it reads SSTPETPLTKRSISTR. Ser-126 carries the phosphoserine modification. Phosphothreonine is present on residues Thr-127 and Thr-130. 4 positions are modified to phosphoserine: Ser-141, Ser-147, Ser-152, and Ser-154. Positions 141-158 are enriched in low complexity; that stretch reads SPHQLLSPSSFSPSATPS.

It belongs to the DNA polymerase alpha subunit B family. As to quaternary structure, component of the alpha DNA polymerase complex (also known as the alpha DNA polymerase-primase complex) consisting of four subunits: the catalytic subunit POLA1, the regulatory subunit POLA2, and the primase complex subunits PRIM1 and PRIM2 respectively. Within the complex, POLA1 directly interacts with PRIM2. Phosphorylated in a cell cycle-dependent manner, in G2/M phase.

The protein localises to the nucleus. Its function is as follows. Accessory subunit of the DNA polymerase alpha complex (also known as the alpha DNA polymerase-primase complex) which plays an essential role in the initiation of DNA synthesis. During the S phase of the cell cycle, the DNA polymerase alpha complex (composed of a catalytic subunit POLA1, an accessory subunit POLA2 and two primase subunits, the catalytic subunit PRIM1 and the regulatory subunit PRIM2) is recruited to DNA at the replicative forks via direct interactions with MCM10 and WDHD1. The primase subunit of the polymerase alpha complex initiates DNA synthesis by oligomerising short RNA primers on both leading and lagging strands. These primers are initially extended by the polymerase alpha catalytic subunit and subsequently transferred to polymerase delta and polymerase epsilon for processive synthesis on the lagging and leading strand, respectively. The polypeptide is DNA polymerase alpha subunit B (Pola2) (Rattus norvegicus (Rat)).